Consider the following 301-residue polypeptide: MPRISDRVTYIYVEHSKINRVDGSITVAESRGIVRIPASMIGILLLGPGTDISHRAMELLGDSGTSVAWVGEQGVRNYAHGRSLSHTSRFLELQAKLVSNTRSRLQVARKMYQMRFPEEDVSSLTMQQLRAKEGARIRKIYRKMSAEYGVDWNGRTYDPDDFEGGDPVNQALSAANVALYGLAYSAIAAMGLATGLGFVHTGHDLSFVYDIADLYKADITVPVAFEIASEYEEGDNVGKISRQKVRDKFIGGKLFATIVRDIQLLFGIKEEEQLNVEPLSLWDNREGNIKYGINYSNENED.

Residues E133, H200, and D213 each coordinate Mn(2+).

This sequence belongs to the CRISPR-associated endonuclease Cas1 family. As to quaternary structure, homodimer, forms a heterotetramer with a Cas2 homodimer. It depends on Mg(2+) as a cofactor. Mn(2+) serves as cofactor.

Functionally, CRISPR (clustered regularly interspaced short palindromic repeat), is an adaptive immune system that provides protection against mobile genetic elements (viruses, transposable elements and conjugative plasmids). CRISPR clusters contain spacers, sequences complementary to antecedent mobile elements, and target invading nucleic acids. CRISPR clusters are transcribed and processed into CRISPR RNA (crRNA). Acts as a dsDNA endonuclease. Involved in the integration of spacer DNA into the CRISPR cassette. This chain is CRISPR-associated endonuclease Cas1, found in Clostridium sp. (strain SY8519).